The sequence spans 321 residues: o-succinylbenzoate synthase (321 aa).

The active-site Proton donor is Lys-110. The Mg(2+) site is built by Asp-138, Glu-165, and Asp-188. Lys-212 functions as the Proton acceptor in the catalytic mechanism.

It belongs to the mandelate racemase/muconate lactonizing enzyme family. MenC type 1 subfamily. Requires a divalent metal cation as cofactor.

The catalysed reaction is (1R,6R)-6-hydroxy-2-succinyl-cyclohexa-2,4-diene-1-carboxylate = 2-succinylbenzoate + H2O. It functions in the pathway quinol/quinone metabolism; 1,4-dihydroxy-2-naphthoate biosynthesis; 1,4-dihydroxy-2-naphthoate from chorismate: step 4/7. Its pathway is quinol/quinone metabolism; menaquinone biosynthesis. Its function is as follows. Converts 2-succinyl-6-hydroxy-2,4-cyclohexadiene-1-carboxylate (SHCHC) to 2-succinylbenzoate (OSB). The sequence is that of o-succinylbenzoate synthase from Mycolicibacterium smegmatis (strain ATCC 700084 / mc(2)155) (Mycobacterium smegmatis).